Consider the following 161-residue polypeptide: 6,7-dimethyl-8-ribityllumazine synthase (161 aa).

Residues Trp-31, 65–67 (TFE), and 89–91 (CVV) contribute to the 5-amino-6-(D-ribitylamino)uracil site. Residue 94 to 95 (DT) participates in (2S)-2-hydroxy-3-oxobutyl phosphate binding. The active-site Proton donor is the His-97. Phe-122 contributes to the 5-amino-6-(D-ribitylamino)uracil binding site. Arg-136 is a (2S)-2-hydroxy-3-oxobutyl phosphate binding site.

This sequence belongs to the DMRL synthase family.

The catalysed reaction is (2S)-2-hydroxy-3-oxobutyl phosphate + 5-amino-6-(D-ribitylamino)uracil = 6,7-dimethyl-8-(1-D-ribityl)lumazine + phosphate + 2 H2O + H(+). It functions in the pathway cofactor biosynthesis; riboflavin biosynthesis; riboflavin from 2-hydroxy-3-oxobutyl phosphate and 5-amino-6-(D-ribitylamino)uracil: step 1/2. In terms of biological role, catalyzes the formation of 6,7-dimethyl-8-ribityllumazine by condensation of 5-amino-6-(D-ribitylamino)uracil with 3,4-dihydroxy-2-butanone 4-phosphate. This is the penultimate step in the biosynthesis of riboflavin. The sequence is that of 6,7-dimethyl-8-ribityllumazine synthase from Porphyromonas gingivalis (strain ATCC 33277 / DSM 20709 / CIP 103683 / JCM 12257 / NCTC 11834 / 2561).